Reading from the N-terminus, the 1066-residue chain is Allene oxide synthase-lipoxygenase protein (1066 aa).

Residues 1–371 are allene oxide synthase; the sequence is MTWKNFGFEI…LKIGSLVPAG (371 aa). Y353 is a heme binding site. The arachidonate 8-lipoxygenase stretch occupies residues 372–1066; the sequence is QNAIYNVEVE…PERIPNGTAI (695 aa). A PLAT domain is found at 374-490; the sequence is AIYNVEVETG…KDMVLFPGEA (117 aa). Ca(2+)-binding residues include H387, G389, T390, D391, N416, D417, E419, D452, and D454. One can recognise a Lipoxygenase domain in the interval 491 to 1066; sequence TLPFNEVPAI…PERIPNGTAI (576 aa). The Fe cation site is built by H757, H762, H943, N947, and I1066.

It in the C-terminal section; belongs to the lipoxygenase family. As to quaternary structure, dimer. Ca(2+) serves as cofactor. It depends on Fe cation as a cofactor. The cofactor is heme.

It localises to the cytoplasm. The protein localises to the membrane. The catalysed reaction is (5Z,8Z,11Z,14Z)-eicosatetraenoate + O2 = (8R)-hydroperoxy-(5Z,9E,11Z,14Z)-eicosatetraenoate. It carries out the reaction (8R)-hydroperoxy-(5Z,9E,11Z,14Z)-eicosatetraenoate = 8,9-epoxy-(5Z,9E,11Z,14Z)-eicosatetraenoate + H2O. It catalyses the reaction (5Z,8Z,11Z,14Z,17Z)-eicosapentaenoate + O2 = (8R)-hydroperoxy-(5Z,9E,11Z,14Z,17Z)-eicosapentaenoate. The enzyme catalyses (4Z,7Z,10Z,13Z,16Z,19Z)-docosahexaenoate + O2 = 10-hydroperoxy-(4Z,7Z,11E,13Z,16Z,19Z)-docosahexaenoate. The catalysed reaction is (8Z,11Z,14Z)-eicosatrienoate + O2 = (8R)-hydroperoxy-(9E,11Z,14Z)-eicosatrienoate. It carries out the reaction (8Z,11Z,14Z)-eicosatrienoate + O2 = 10-hydroperoxy-(8Z,11Z,14Z)-eicosatrienoate. It catalyses the reaction (8Z,11Z,14Z)-eicosatrienoate + O2 = 11-hydroperoxy-(8Z,12E,14Z)-eicosatrienoate. The protein operates within lipid metabolism; arachidonate metabolism. Its pathway is lipid metabolism; fatty acid metabolism. Lipoxygenase activity is stimulated by calcium, sodium, lithium and potassium ions. Calcium binding promotes interaction with membranes and thus facilitates access to substrates. Its function is as follows. Bifunctional enzyme which is responsible for allene oxide biosynthesis via a two-step reaction; first the lipoxygenase reaction that converts polyunsaturated fatty acids such as arachidonate ((5Z,8Z,11Z,14Z)-eicosatetraenoate) into a (8R)-hydroperoxide intermediate ((8R)-hydroperoxy-(5Z,9E,11Z,14Z)-eicosatetraenoate) followed by the allene oxide synthase reaction that converts the hydroperoxide intermediate ((8R)-hydroperoxy-(5Z,9E,11Z,14Z)-eicosatetraenoate) into the allene oxide (8,9-epoxy-(5Z,9E,11Z,14Z)-eicosatetraenoate). Shows preference for C20 or C22 highly polyunsaturated fatty acids and no activity with C18 fatty acids in vitro. Fatty acid allene oxides are intermediates in the formation of cyclopentenones or hydrolytic products in marine systems, most notably the prostanoid-related clavulones. The sequence is that of Allene oxide synthase-lipoxygenase protein from Plexaura homomalla (Black sea rod).